The primary structure comprises 409 residues: Short chain dehydrogenase sirS (409 aa).

Positions 49, 68, 195, 288, 290, and 299 each coordinate NADP(+). Positions 306-332 (GVGPEGAGEEEGKGEAEGGAKGATGWS) are disordered.

The protein belongs to the short-chain dehydrogenases/reductases (SDR) family. Highly divergent.

Its pathway is mycotoxin biosynthesis. Functionally, short chain dehydrogenase; part of the gene cluster that mediates the biosynthesis of sirodesmin PL, an epipolythiodioxopiperazine (ETP) characterized by a disulfide bridged cyclic dipeptide and that acts as a phytotoxin which is involved in the blackleg didease of canola. SirD catalyzes the O-prenylation of L-tyrosine (L-Tyr) in the presence of dimethylallyl diphosphate (DMAPP) to yield 4-O-dimethylallyl-L-Tyr, and therefore represents probably the first pathway-specific enzyme in the biosynthesis of sirodesmin PL. 4-O-dimethylallyl-L-Tyr, then undergoes condensation with L-Ser in a reaction catalyzed by the non-ribosomal peptide synthase sirP to form the diketopiperazine (DKP) backbone. Further bishydroxylation of the DKP performed by the cytochrome P450 monooxygenase sirC leads to the production of the intermediate phomamide. This step is essential to form the reactive thiol group required for toxicity of sirodesmin PL. The next steps of sirodesmin biosynthesis are not well understood yet, but some predictions could be made from intermediate compounds identification. Phomamide is converted into phomalizarine via oxidation, probably by sirT. Further oxidation, methylation (by sirM or sirN) and reduction steps convert phomalizarine to deacetyl sirodesmin. Finally, acetyltransferase sirH probably acetylates deacetyl sirodesmin to produce sirodesmin PL. The chain is Short chain dehydrogenase sirS from Leptosphaeria maculans (Blackleg fungus).